The following is a 225-amino-acid chain: Biosynthetic peptidoglycan transglycosylase (225 aa).

A helical membrane pass occupies residues 8 to 28 (VLLIFIGAILFIQLWIFSSLV).

It belongs to the glycosyltransferase 51 family.

It is found in the cell inner membrane. It catalyses the reaction [GlcNAc-(1-&gt;4)-Mur2Ac(oyl-L-Ala-gamma-D-Glu-L-Lys-D-Ala-D-Ala)](n)-di-trans,octa-cis-undecaprenyl diphosphate + beta-D-GlcNAc-(1-&gt;4)-Mur2Ac(oyl-L-Ala-gamma-D-Glu-L-Lys-D-Ala-D-Ala)-di-trans,octa-cis-undecaprenyl diphosphate = [GlcNAc-(1-&gt;4)-Mur2Ac(oyl-L-Ala-gamma-D-Glu-L-Lys-D-Ala-D-Ala)](n+1)-di-trans,octa-cis-undecaprenyl diphosphate + di-trans,octa-cis-undecaprenyl diphosphate + H(+). It participates in cell wall biogenesis; peptidoglycan biosynthesis. Functionally, peptidoglycan polymerase that catalyzes glycan chain elongation from lipid-linked precursors. The chain is Biosynthetic peptidoglycan transglycosylase from Acinetobacter baumannii (strain ATCC 17978 / DSM 105126 / CIP 53.77 / LMG 1025 / NCDC KC755 / 5377).